The chain runs to 95 residues: N(2)-fixation sustaining protein CowN (95 aa).

It belongs to the CowN family.

Its function is as follows. Is required to sustain N(2)-dependent growth in the presence of low levels of carbon monoxide (CO). Probably acts by protecting the N(2) fixation ability of the nitrogenase complex, which is inactivated in the presence of CO. This chain is N(2)-fixation sustaining protein CowN, found in Allochromatium vinosum (strain ATCC 17899 / DSM 180 / NBRC 103801 / NCIMB 10441 / D) (Chromatium vinosum).